The primary structure comprises 134 residues: Small ribosomal subunit protein uS8c (134 aa).

As to quaternary structure, component of the chloroplast small ribosomal subunit (SSU). Mature 70S chloroplast ribosomes of higher plants consist of a small (30S) and a large (50S) subunit. The 30S small subunit contains 1 molecule of ribosomal RNA (16S rRNA) and 24 different proteins. The 50S large subunit contains 3 rRNA molecules (23S, 5S and 4.5S rRNA) and 33 different proteins.

The protein localises to the plastid. The protein resides in the chloroplast. Functionally, component of the chloroplast ribosome (chloro-ribosome), a dedicated translation machinery responsible for the synthesis of chloroplast genome-encoded proteins, including proteins of the transcription and translation machinery and components of the photosynthetic apparatus. This chain is Small ribosomal subunit protein uS8c (rps8), found in Spinacia oleracea (Spinach).